Consider the following 622-residue polypeptide: 1,4-alpha-glucan branching enzyme GlgB (622 aa).

Asp300 functions as the Nucleophile in the catalytic mechanism. The active-site Proton donor is the Glu351.

This sequence belongs to the glycosyl hydrolase 13 family. GlgB subfamily. Monomer.

The catalysed reaction is Transfers a segment of a (1-&gt;4)-alpha-D-glucan chain to a primary hydroxy group in a similar glucan chain.. The protein operates within glycan biosynthesis; glycogen biosynthesis. In terms of biological role, catalyzes the formation of the alpha-1,6-glucosidic linkages in glycogen by scission of a 1,4-alpha-linked oligosaccharide from growing alpha-1,4-glucan chains and the subsequent attachment of the oligosaccharide to the alpha-1,6 position. The polypeptide is 1,4-alpha-glucan branching enzyme GlgB (Streptococcus agalactiae serotype V (strain ATCC BAA-611 / 2603 V/R)).